Here is a 937-residue protein sequence, read N- to C-terminus: AP-2 complex subunit beta (937 aa).

The residue at position 2 (threonine 2) is an N-acetylthreonine. Serine 4 bears the Phosphoserine mark. N6-acetyllysine is present on lysine 265. Residues tyrosine 737 and tyrosine 928 each carry the phosphotyrosine modification.

This sequence belongs to the adaptor complexes large subunit family. As to quaternary structure, adapter protein complex 2 (AP-2) is a heterotetramer composed of two large adaptins (alpha-type subunit AP2A1 or AP2A2 and beta-type subunit AP2B1), a medium adaptin (mu-type subunit AP2M1) and a small adaptin (sigma-type subunit AP2S1). Interacts with EPN1. Interacts with EPS15; clathrin competes with EPS15. Interacts with SNAP91; clathrin competes with SNAP91. Interacts with CLTC; clathrin competes with EPS15, SNAP91 and PIP5K1C. Interacts with LDLRAP1. Interacts with AMPH and BIN1. Interacts with ARF6 (GDP-bound). Interacts (dephosphorylated at Tyr-737) with ARRB1; phosphorylation of AP2B1 at Tyr-737 disrupts the interaction. Interacts with SLC2A8. Interacts with SCYL1 and SCYL2. Interacts with TGFBR1 and TGFBR2. Interacts with PIP5K1C; clathrin competes with PIP5K1C. Interacts with DENND1B. Interacts with FCHO1. Interacts with RFTN1. Interacts with KIAA1107. Together with AP2A1 or AP2A2 and AP2M1, it interacts with ADAM10; this interaction facilitates ADAM10 endocytosis from the plasma membrane during long-term potentiation in hippocampal neurons. The N-terminus is blocked. In terms of processing, phosphorylation at Tyr-737 by SRC occurs at the plasma membrane in clathrin-coated vesicles (CCVs).

Its subcellular location is the cell membrane. It localises to the membrane. The protein resides in the coated pit. Its function is as follows. Component of the adaptor protein complex 2 (AP-2). Adaptor protein complexes function in protein transport via transport vesicles in different membrane traffic pathways. Adaptor protein complexes are vesicle coat components and appear to be involved in cargo selection and vesicle formation. AP-2 is involved in clathrin-dependent endocytosis in which cargo proteins are incorporated into vesicles surrounded by clathrin (clathrin-coated vesicles, CCVs) which are destined for fusion with the early endosome. The clathrin lattice serves as a mechanical scaffold but is itself unable to bind directly to membrane components. Clathrin-associated adaptor protein (AP) complexes which can bind directly to both the clathrin lattice and to the lipid and protein components of membranes are considered to be the major clathrin adaptors contributing the CCV formation. AP-2 also serves as a cargo receptor to selectively sort the membrane proteins involved in receptor-mediated endocytosis. AP-2 seems to play a role in the recycling of synaptic vesicle membranes from the presynaptic surface. AP-2 recognizes Y-X-X-[FILMV] (Y-X-X-Phi) and [ED]-X-X-X-L-[LI] endocytosis signal motifs within the cytosolic tails of transmembrane cargo molecules. AP-2 may also play a role in maintaining normal post-endocytic trafficking through the ARF6-regulated, non-clathrin pathway. During long-term potentiation in hippocampal neurons, AP-2 is responsible for the endocytosis of ADAM10. The AP-2 beta subunit acts via its C-terminal appendage domain as a scaffolding platform for endocytic accessory proteins; at least some clathrin-associated sorting proteins (CLASPs) are recognized by their [DE]-X(1,2)-F-X-X-[FL]-X-X-X-R motif. The AP-2 beta subunit binds to clathrin heavy chain, promoting clathrin lattice assembly; clathrin displaces at least some CLASPs from AP2B1 which probably then can be positioned for further coat assembly. In Bos taurus (Bovine), this protein is AP-2 complex subunit beta (AP2B1).